Reading from the N-terminus, the 806-residue chain is ATP-dependent zinc metalloprotease FTSH 11, chloroplastic/mitochondrial (806 aa).

The transit peptide at 1–63 directs the protein to the chloroplast and mitochondrion; it reads MSSSTLQASL…RFRPLPCSLR (63 aa). Positions 106–116 are enriched in basic and acidic residues; that stretch reads FVGGEETKSGG. Residues 106–130 form a disordered region; the sequence is FVGGEETKSGGEEAEVSNGVTEGKE. A helical membrane pass occupies residues 301-321; sequence LVSTILFTVAVGLVWIMGAAA. 402-409 provides a ligand contact to ATP; that stretch reads GAPGTGKT. H620 is a Zn(2+) binding site. E621 is an active-site residue. Zn(2+)-binding residues include H624 and D698.

The protein in the N-terminal section; belongs to the AAA ATPase family. In the C-terminal section; belongs to the peptidase M41 family. Homooligomer. Requires Zn(2+) as cofactor.

Its subcellular location is the mitochondrion inner membrane. The protein resides in the plastid. It localises to the chloroplast thylakoid membrane. Its function is as follows. Probable ATP-dependent zinc metallopeptidase. Involved in the assembly and/or stability of the complexes I and V. Involved in thermotolerance but not in high light stress resistance or in the assembly/stability of the complexes I and V of the mitochondrial oxidative phosphorylation system. The protein is ATP-dependent zinc metalloprotease FTSH 11, chloroplastic/mitochondrial (FTSH11) of Arabidopsis thaliana (Mouse-ear cress).